We begin with the raw amino-acid sequence, 284 residues long: Putative ABC transporter ATP-binding protein MG468.1 homolog (284 aa).

The ABC transporter domain occupies 53–284 (VLFKGVCKAV…PKTINEINWV (232 aa)). 89–96 (GKSGSGKT) serves as a coordination point for ATP.

The protein belongs to the ABC transporter superfamily.

This Mycoplasma pneumoniae (strain ATCC 29342 / M129 / Subtype 1) (Mycoplasmoides pneumoniae) protein is Putative ABC transporter ATP-binding protein MG468.1 homolog.